Consider the following 580-residue polypeptide: Isocitrate lyase (580 aa).

A substrate-binding site is contributed by 106–108 (SGW). Asp-177 lines the Mg(2+) pocket. Cys-215 (proton acceptor) is an active-site residue. Substrate contacts are provided by residues 216-217 (GH), Arg-252, 441-445 (NLSPS), and Thr-476. Positions 578–580 (SRM) match the Microbody targeting signal motif.

Belongs to the isocitrate lyase/PEP mutase superfamily. Isocitrate lyase family. In terms of assembly, homotetramer. Mg(2+) serves as cofactor.

It is found in the glyoxysome. It catalyses the reaction D-threo-isocitrate = glyoxylate + succinate. It participates in carbohydrate metabolism; glyoxylate cycle; (S)-malate from isocitrate: step 1/2. In terms of biological role, involved in storage lipid mobilization during the growth of higher plant seedling. The chain is Isocitrate lyase (ICL 8) from Pinus taeda (Loblolly pine).